Consider the following 395-residue polypeptide: Flap endonuclease 1 (395 aa).

An N-domain region spans residues methionine 1 to lysine 104. Aspartate 34 provides a ligand contact to Mg(2+). Residues arginine 47 and arginine 70 each contribute to the DNA site. The Mg(2+) site is built by aspartate 86, glutamate 158, glutamate 160, aspartate 179, and aspartate 181. Residues glutamate 122–histidine 253 are I-domain. Glutamate 158 serves as a coordination point for DNA. The DNA site is built by glycine 231 and aspartate 233. Residue aspartate 233 coordinates Mg(2+). An interaction with PCNA region spans residues glutamine 341–phenylalanine 349. Over residues alanine 360–serine 389 the composition is skewed to basic and acidic residues. A disordered region spans residues alanine 360–threonine 395.

Belongs to the XPG/RAD2 endonuclease family. FEN1 subfamily. As to quaternary structure, interacts with PCNA. Three molecules of FEN1 bind to one PCNA trimer with each molecule binding to one PCNA monomer. PCNA stimulates the nuclease activity without altering cleavage specificity. Requires Mg(2+) as cofactor. Post-translationally, phosphorylated. Phosphorylation upon DNA damage induces relocalization to the nuclear plasma.

It is found in the nucleus. The protein localises to the nucleolus. It localises to the nucleoplasm. Its subcellular location is the mitochondrion. In terms of biological role, structure-specific nuclease with 5'-flap endonuclease and 5'-3' exonuclease activities involved in DNA replication and repair. During DNA replication, cleaves the 5'-overhanging flap structure that is generated by displacement synthesis when DNA polymerase encounters the 5'-end of a downstream Okazaki fragment. It enters the flap from the 5'-end and then tracks to cleave the flap base, leaving a nick for ligation. Also involved in the long patch base excision repair (LP-BER) pathway, by cleaving within the apurinic/apyrimidinic (AP) site-terminated flap. Acts as a genome stabilization factor that prevents flaps from equilibrating into structures that lead to duplications and deletions. Also possesses 5'-3' exonuclease activity on nicked or gapped double-stranded DNA, and exhibits RNase H activity. Also involved in replication and repair of rDNA and in repairing mitochondrial DNA. The polypeptide is Flap endonuclease 1 (Ajellomyces capsulatus (strain NAm1 / WU24) (Darling's disease fungus)).